The chain runs to 896 residues: Histone-lysine N-methyltransferase CLF (896 aa).

Disordered stretches follow at residues 344 to 419 (DNLK…NRRI) and 459 to 514 (SGIK…DGCD). Residues 358–390 (GSSGQKTKSQQSESSSTARVSSESSESEVQLLS) are compositionally biased toward low complexity. Composition is skewed to polar residues over residues 391–400 (NKSPQHSPGL), 465–476 (VVSSQCNSPSTR), and 485–498 (QMEN…AQSD). Positions 504 to 514 (NNEHSATDGCD) are enriched in basic and acidic residues. Residues 633-732 (RKRITERKDQ…TLGVPNQRGD (100 aa)) enclose the CXC domain. Positions 747–862 (QRVLLGRSDV…AGEELFYDYR (116 aa)) constitute an SET domain. Tyr-861 is a binding site for S-adenosyl-L-methionine. A compositionally biased stretch (basic and acidic residues) spans 869-884 (PAWARKPEGPGAKDDA). Residues 869-896 (PAWARKPEGPGAKDDAQPSTGRAKKLAH) form a disordered region.

This sequence belongs to the class V-like SAM-binding methyltransferase superfamily. Histone-lysine methyltransferase family. EZ subfamily. In terms of assembly, interacts with FIE1. Component of the polycomb repressive complex 2 (PRC2), composed of the core PRC2 components FIE2, EMF2B and EZ1. PRC2 methylates 'Lys-27' residues of histone H3 (H3K27me3), leading to transcriptional repression of the affected target gene. As to expression, widely expressed. Highly expressed in young panicle.

It carries out the reaction L-lysyl(27)-[histone H3] + 3 S-adenosyl-L-methionine = N(6),N(6),N(6)-trimethyl-L-lysyl(27)-[histone H3] + 3 S-adenosyl-L-homocysteine + 3 H(+). Polycomb group (PcG) protein. Catalytic subunit of some PcG multiprotein complex, which methylates 'Lys-27' of histone H3, leading to transcriptional repression of the affected target genes. PcG proteins act by forming multiprotein complexes, which are required to maintain the transcriptionally repressive state of homeotic genes throughout development. PcG proteins are not required to initiate repression, but to maintain it during later stages of development. Involved in the regulation of flowering. Represses flowering under long day (LD) conditions. Regulates the trimethylation on histone H3 'Lys-27' (H3K27me3) of the flowering regulators MADS14, MADS15, RFT1, EHD1, HD3A and LF. In Oryza sativa subsp. japonica (Rice), this protein is Histone-lysine N-methyltransferase CLF.